The sequence spans 569 residues: MASLQFSSQFLGSNTKTHSSIISISRSYSPTPFTRFSRKKYESCSMSMNGCDGDFKTPLGTVETRTMTAVLSPAAATERLISAVSELKSQPPSFSSGVVRLQVPIDQQIGAIDWLQAQNEIQPRCFFSRRSDVGRPDLLLDLANENGNGNGNGTVSSDRNLVSVAGIGSAVFFRDLDPFSHDDWRSIRRFLSSTSPLIRAYGGMRFDPNGKIAVEWEPFGAFYFSVPQVEFNEFGGSSMLAATIAWDDELSWTLENAIEALQETMLQVSSVVMKLRNRSLGVSVLSKNHVPTKGAYFPAVEKALEMINQKSSPLNKVVLARNSRIITDTDIDPIAWLAQLQREGHDAYQFCLQPPGAPAFIGNTPERLFQRTQLGVCSEALAATRPRAASSARDMEIERDLLTSPKDDLEFSIVRENIREKLNGICDRVVVKPQKTVRKLARVQHLYSQLAGRLTKEDDEYKILAALHPTPAVCGLPAEEARLLIKEIESFDRGMYAGPIGFFGGEESEFAVGIRSALVEKGLGALIYAGTGIVAGSDPSSEWNELDLKISQFTKSIEYEATTSLQAIN.

The transit peptide at M1–S45 directs the protein to the chloroplast.

It belongs to the isochorismate synthase family. As to quaternary structure, monomer. The cofactor is Mg(2+). Leaves.

Its subcellular location is the plastid. The protein resides in the chloroplast. The enzyme catalyses chorismate = isochorismate. It functions in the pathway siderophore biosynthesis; salicylate biosynthesis. Isochorismate synthase involved in the synthesis of salicylic acid (SA) required for both local and systemic acquired resistance (LAR and SAR) while SA synthesized through the phenylalanine ammonium lyase (PAL) pathway seems to potentiate plant cell death. Also involved in phylloquinone (vitamin K1) synthesis. Has no isochorismate pyruvate lyase (IPL) activity. The chain is Isochorismate synthase 1, chloroplastic (ICS1) from Arabidopsis thaliana (Mouse-ear cress).